Reading from the N-terminus, the 509-residue chain is UDP-N-acetylmuramoyl-L-alanyl-D-glutamate--2,6-diaminopimelate ligase (509 aa).

S32 is a UDP-N-acetyl-alpha-D-muramoyl-L-alanyl-D-glutamate binding site. 117 to 123 (GTNGKTT) lines the ATP pocket. Residues 159–160 (TT), S186, Q192, and R194 each bind UDP-N-acetyl-alpha-D-muramoyl-L-alanyl-D-glutamate. K226 is modified (N6-carboxylysine). Residues R401, 425–428 (DNPR), G476, and E480 contribute to the meso-2,6-diaminopimelate site. A Meso-diaminopimelate recognition motif motif is present at residues 425 to 428 (DNPR).

The protein belongs to the MurCDEF family. MurE subfamily. Mg(2+) serves as cofactor. Post-translationally, carboxylation is probably crucial for Mg(2+) binding and, consequently, for the gamma-phosphate positioning of ATP.

The protein resides in the cytoplasm. It carries out the reaction UDP-N-acetyl-alpha-D-muramoyl-L-alanyl-D-glutamate + meso-2,6-diaminopimelate + ATP = UDP-N-acetyl-alpha-D-muramoyl-L-alanyl-gamma-D-glutamyl-meso-2,6-diaminopimelate + ADP + phosphate + H(+). It participates in cell wall biogenesis; peptidoglycan biosynthesis. Functionally, catalyzes the addition of meso-diaminopimelic acid to the nucleotide precursor UDP-N-acetylmuramoyl-L-alanyl-D-glutamate (UMAG) in the biosynthesis of bacterial cell-wall peptidoglycan. The chain is UDP-N-acetylmuramoyl-L-alanyl-D-glutamate--2,6-diaminopimelate ligase from Prochlorococcus marinus (strain NATL2A).